Consider the following 672-residue polypeptide: Acetoacetyl-CoA synthetase (672 aa).

This sequence belongs to the ATP-dependent AMP-binding enzyme family.

It is found in the cytoplasm. The protein localises to the cytosol. It carries out the reaction acetoacetate + ATP + CoA = acetoacetyl-CoA + AMP + diphosphate. Converts acetoacetate to acetoacetyl-CoA in the cytosol. Ketone body-utilizing enzyme, responsible for the synthesis of cholesterol and fatty acids. The protein is Acetoacetyl-CoA synthetase (Aacs) of Mus musculus (Mouse).